We begin with the raw amino-acid sequence, 195 residues long: Protein GrpE (195 aa).

Basic and acidic residues predominate over residues 1-20; the sequence is MSSKEQKTPDEQVLDQKEAA. Positions 1-40 are disordered; the sequence is MSSKEQKTPDEQVLDQKEAAKGQQADAAPETADVADPRDE.

It belongs to the GrpE family. Homodimer.

The protein resides in the cytoplasm. Participates actively in the response to hyperosmotic and heat shock by preventing the aggregation of stress-denatured proteins, in association with DnaK and GrpE. It is the nucleotide exchange factor for DnaK and may function as a thermosensor. Unfolded proteins bind initially to DnaJ; upon interaction with the DnaJ-bound protein, DnaK hydrolyzes its bound ATP, resulting in the formation of a stable complex. GrpE releases ADP from DnaK; ATP binding to DnaK triggers the release of the substrate protein, thus completing the reaction cycle. Several rounds of ATP-dependent interactions between DnaJ, DnaK and GrpE are required for fully efficient folding. The protein is Protein GrpE of Pectobacterium atrosepticum (strain SCRI 1043 / ATCC BAA-672) (Erwinia carotovora subsp. atroseptica).